Reading from the N-terminus, the 299-residue chain is MLDKTRLRIAMQKSGRLSDDSRELLARCGIKINLQQQRLIAFAENMPIDILRVRDDDIPGLVMDGVVDLGIIGENVLEEELLNRRAQGEDPRYFTLRRLDFGGCRLSLAMQLDEAYTGPECLQNKRIATSYPHLLKQYLDRQSVNFKSCLLNGSVEVAPRAGLADAICDLVSTGATLEANGLREVEVIYRSKACLIQRDGEMPAEKQQLIDKLLTRMQGVIQARESKYIMLHAPSERLDEVIALLPGAERPTILPLAGDQSRVAMHMVSSETLFWETMEKLKSLGASSILVLPIEKMME.

It belongs to the ATP phosphoribosyltransferase family. Long subfamily. In terms of assembly, equilibrium between an active dimeric form, an inactive hexameric form and higher aggregates. Interconversion between the various forms is largely reversible and is influenced by the natural substrates and inhibitors of the enzyme. It depends on Mg(2+) as a cofactor.

The protein resides in the cytoplasm. The catalysed reaction is 1-(5-phospho-beta-D-ribosyl)-ATP + diphosphate = 5-phospho-alpha-D-ribose 1-diphosphate + ATP. It participates in amino-acid biosynthesis; L-histidine biosynthesis; L-histidine from 5-phospho-alpha-D-ribose 1-diphosphate: step 1/9. With respect to regulation, feedback inhibited by histidine. Catalyzes the condensation of ATP and 5-phosphoribose 1-diphosphate to form N'-(5'-phosphoribosyl)-ATP (PR-ATP). Has a crucial role in the pathway because the rate of histidine biosynthesis seems to be controlled primarily by regulation of HisG enzymatic activity. The chain is ATP phosphoribosyltransferase from Pectobacterium atrosepticum (strain SCRI 1043 / ATCC BAA-672) (Erwinia carotovora subsp. atroseptica).